The chain runs to 347 residues: NADH-ubiquinone oxidoreductase chain 2 (347 aa).

The next 10 membrane-spanning stretches (helical) occupy residues 3 to 23 (PPIL…VLTS), 25 to 45 (HWLT…PILM), 60 to 80 (LLTQ…NLMF), 96 to 116 (AMVT…FWVP), 149 to 169 (IDPN…GWGG), 178 to 198 (ILAY…LYNP), 200 to 220 (MMLL…MLFM), 237 to 257 (APLI…LPPL), 274 to 294 (EMII…YFYM), and 323 to 343 (MILL…TPLL).

It belongs to the complex I subunit 2 family. In terms of assembly, core subunit of respiratory chain NADH dehydrogenase (Complex I) which is composed of 45 different subunits. Interacts with TMEM242.

Its subcellular location is the mitochondrion inner membrane. The catalysed reaction is a ubiquinone + NADH + 5 H(+)(in) = a ubiquinol + NAD(+) + 4 H(+)(out). In terms of biological role, core subunit of the mitochondrial membrane respiratory chain NADH dehydrogenase (Complex I) which catalyzes electron transfer from NADH through the respiratory chain, using ubiquinone as an electron acceptor. Essential for the catalytic activity and assembly of complex I. The polypeptide is NADH-ubiquinone oxidoreductase chain 2 (Mungos mungo (Banded mongoose)).